Here is a 1220-residue protein sequence, read N- to C-terminus: Plasma membrane calcium-transporting ATPase 1 (1220 aa).

Residue Gly2 is modified to N-acetylglycine. The Cytoplasmic portion of the chain corresponds to Gly2 to Ala105. Ser8 and Ser17 each carry phosphoserine. A helical membrane pass occupies residues Leu106–Phe126. Over Tyr127–Ile154 the chain is Extracellular. The chain crosses the membrane as a helical span at residues Glu155–Trp175. Residues Ser176–Leu366 are Cytoplasmic-facing. Residues Glu297–Lys356 form a disordered region. Composition is skewed to basic and acidic residues over residues Lys312–Ala325 and Lys337–Lys356. At Ser338 the chain carries Phosphoserine. A helical membrane pass occupies residues Thr367–Ile386. Residues Ile387–Lys418 lie on the Extracellular side of the membrane. The chain crosses the membrane as a helical span at residues Phe419 to Val439. The Cytoplasmic portion of the chain corresponds to Thr440–Phe855. The active-site 4-aspartylphosphate intermediate is Asp475. Positions 475, 477, and 797 each coordinate Mg(2+). The chain crosses the membrane as a helical span at residues Leu856–Ile876. Topologically, residues Thr877–Leu882 are extracellular. The helical transmembrane segment at Lys883–Ala903 threads the bilayer. Over Thr904–Thr927 the chain is Cytoplasmic. A helical transmembrane segment spans residues Met928 to Phe948. At Ala949–His971 the chain is on the extracellular side. A helical membrane pass occupies residues Tyr972–Arg991. At Lys992–Asn1005 the chain is on the cytoplasmic side. Residues Asn1006–Gly1027 form a helical membrane-spanning segment. The Extracellular portion of the chain corresponds to Gly1028 to Glu1039. A helical membrane pass occupies residues Gln1040–Thr1060. Over Ile1061–Leu1220 the chain is Cytoplasmic. The segment at Leu1100–Gln1117 is calmodulin-binding subdomain A. Thr1116 is modified (phosphothreonine; by PKC). Residues Ile1118–Leu1220 are required for basolateral membrane targeting. Phosphoserine occurs at positions 1140 and 1155. The interval Pro1160–Leu1220 is disordered. Thr1165 is subject to Phosphothreonine. Residues Ser1178 and Ser1182 each carry the phosphoserine modification. The segment covering Met1200–Leu1220 has biased composition (polar residues).

Belongs to the cation transport ATPase (P-type) (TC 3.A.3) family. Type IIB subfamily. In terms of assembly, monomer. Dimer. Oligomer. Calmodulin binding. Interacts with PDZD11. Interacts with SLC35G1 and STIM1. Interacts with YWHAE; interacts with the monomeric and dimeric forms of the YWHAE but prefer the monomer form; this interaction inhibits calcium-transporting ATPase activity. Interacts with NPTN; this interaction stabilizes ATP2B1 and increases ATPase activity; this interaction controls T cell calcium homeostasis following T cell activation. Interacts with EPB41; regulates small intestinal calcium absorption through regulation of membrane expression of ATP2B1. In terms of tissue distribution, expressed in the retina, with strongest expression in the outer plexiform layer and lower expression levels in the inner nuclear layer and the inner plexiform layer. Specifically expressed in the following retinal cell types: photoreceptor cells, cone bipolar cells and horizontal cells. Expressed in osteoclasts (at protein level). Expressed at highest levels in brain, intestine, kidney, and stomach, and at lower levels in liver, lung, aorta, portal vein, urinary bladder, diaphragm, seminal vesicles and testes. Expressed in small intestinal epithelium.

The protein resides in the cell membrane. It localises to the basolateral cell membrane. It is found in the synapse. The protein localises to the presynaptic cell membrane. Its subcellular location is the cytoplasmic vesicle. The protein resides in the secretory vesicle. It localises to the synaptic vesicle membrane. It carries out the reaction Ca(2+)(in) + ATP + H2O = Ca(2+)(out) + ADP + phosphate + H(+). Catalyzes the hydrolysis of ATP coupled with the transport of calcium from the cytoplasm to the extracellular space thereby maintaining intracellular calcium homeostasis. Plays a role in blood pressure regulation through regulation of intracellular calcium concentration and nitric oxide production leading to regulation of vascular smooth muscle cells vasoconstriction. Positively regulates bone mineralization through absorption of calcium from the intestine. Plays dual roles in osteoclast differentiation and survival by regulating RANKL-induced calcium oscillations in preosteoclasts and mediating calcium extrusion in mature osteoclasts. Regulates insulin sensitivity through calcium/calmodulin signaling pathway by regulating AKT1 activation and NOS3 activation in endothelial cells. May play a role in synaptic transmission by modulating calcium and proton dynamics at the synaptic vesicles. The polypeptide is Plasma membrane calcium-transporting ATPase 1 (Mus musculus (Mouse)).